A 461-amino-acid polypeptide reads, in one-letter code: uncharacterized protein (461 aa).

3 LRR repeats span residues 119-140 (NVKK…EKMS), 141-162 (LLEV…QHCK), and 163-184 (NLKE…EYLK). Positions 197 to 237 (NPCVGEGGQEYRRKVIRVLPNLTKLDDKPVTTTDHQEAIED) constitute an LRRCT domain.

This is an uncharacterized protein from Caenorhabditis elegans.